The sequence spans 1673 residues: Calmodulin-binding transcription activator 1 (1673 aa).

The CG-1 DNA-binding region spans 63–188 (KCSSLPKERH…YLNVPAIEDC (126 aa)). A Nuclear localization signal motif is present at residues 112 to 119 (RKKVKYRK). The tract at residues 283 to 375 (HRIISPKVEP…LNSDPDMVDS (93 aa)) is disordered. Residues 302–313 (EVQHNDVSEGKH) are compositionally biased toward basic and acidic residues. Residues 337-367 (HQSSTEVSSTNQVEVPDTTQSSPVSISSGLN) show a composition bias toward polar residues. Residues 875–953 (DYSPEWSYPE…ISNSVVFEYK (79 aa)) form the IPT/TIG domain. Residues 990–1021 (MAEMTGSQQHKQASGGGSSGGGSGSGNGGSQA) are disordered. Positions 1003–1018 (SGGGSSGGGSGSGNGG) are enriched in gly residues. ANK repeat units lie at residues 1064 to 1093 (RGMT…KHAD), 1109 to 1129 (FSCT…AVVL), and 1143 to 1172 (LGRL…DEQA). Disordered regions lie at residues 1215–1246 (ASTN…PKKH) and 1264–1317 (ALSL…GSQP). The segment covering 1273–1289 (RKQSPSSKQSVPETLSP) has biased composition (polar residues). 3 IQ domains span residues 1547 to 1576 (QEVA…AAIL), 1577 to 1599 (IQSK…AAVL), and 1600 to 1622 (IQKY…TAVI).

This sequence belongs to the CAMTA family. In terms of assembly, may interact with calmodulin. Normally expressed in non-neoplastic adult central nervous system tissues: detected in whole brain, cerebellum, brain cortex, occipital lobe, frontal lobe, temporal lobe, putamen. Expression levels are low in oligodendroglial tumors, and are reduced by half in oligodendroglioma and astrocytoma cases with 1p loss of heterozygosity. Detected in neuroblastic-type cultured neuroblastoma cells. Expressed in heart and kidney.

The protein localises to the nucleus. It localises to the cytoplasm. Functionally, transcriptional activator. This Homo sapiens (Human) protein is Calmodulin-binding transcription activator 1.